The following is a 462-amino-acid chain: L-seryl-tRNA(Sec) selenium transferase (462 aa).

At lysine 293 the chain carries N6-(pyridoxal phosphate)lysine.

The protein belongs to the SelA family. Pyridoxal 5'-phosphate serves as cofactor.

It is found in the cytoplasm. The catalysed reaction is L-seryl-tRNA(Sec) + selenophosphate + H(+) = L-selenocysteinyl-tRNA(Sec) + phosphate. It participates in aminoacyl-tRNA biosynthesis; selenocysteinyl-tRNA(Sec) biosynthesis; selenocysteinyl-tRNA(Sec) from L-seryl-tRNA(Sec) (bacterial route): step 1/1. Functionally, converts seryl-tRNA(Sec) to selenocysteinyl-tRNA(Sec) required for selenoprotein biosynthesis. The sequence is that of L-seryl-tRNA(Sec) selenium transferase from Clostridium botulinum (strain 657 / Type Ba4).